The sequence spans 446 residues: Citrate/sodium symporter (446 aa).

The Cytoplasmic segment spans residues 1–27 (MTNMSQPPATEKKGVSDLLGFKIFGMP). A helical membrane pass occupies residues 28-44 (LPLYAFALITLLLSHFY). Residues 45-50 (NALPTD) are Periplasmic-facing. A helical membrane pass occupies residues 51–71 (IVGGFAIMFIIGAIFGEIGKR). The Cytoplasmic portion of the chain corresponds to 72–80 (LPIFNKYIG). A helical membrane pass occupies residues 81–95 (GAPVMIFLVAAYFVY). Over 96–115 (AGIFTQKEIDAISNVMDKSN) the chain is Periplasmic. The chain crosses the membrane as a helical span at residues 116-130 (FLNLFIAVLITGAIL). The Cytoplasmic portion of the chain corresponds to 131 to 136 (SVNRRL). A helical transmembrane segment spans residues 137 to 166 (LLKSLLGYIPTILMGIVGASIFGIAIGLVF). At 167 to 181 (GIPVDRIMMLYVLPI) the chain is on the periplasmic side. Residues Ile181 and Gly183 each coordinate Na(+). An intramembrane region (helical) is located at residues 182–189 (MGGGNGAG). Positions 186 and 187 each coordinate citrate. The Periplasmic segment spans residues 190–212 (AVPLSEIYHSVTGRSREEYYSTA). Residues 213 to 233 (IAILTIANIFAIVFAAVLDII) traverse the membrane as a helical segment. Residues 234-264 (GKKHTWLSGEGELVRKASFKVEEDEKTGQIT) are Cytoplasmic-facing. The chain crosses the membrane as a helical span at residues 265–287 (HRETAVGLVLSTTCFLLAYVVAK). The Periplasmic portion of the chain corresponds to 288-299 (KILPSIGGVAIH). The helical transmembrane segment at 300–315 (YFAWMVLIVAALNASG) threads the bilayer. At 316–327 (LCSPEIKAGAKR) the chain is on the cytoplasmic side. A helical transmembrane segment spans residues 328–351 (LSDFFSKQLLWVLMVGVGVCYTDL). Residues 352–359 (QEIINAIT) lie on the Periplasmic side of the membrane. Residues 360–381 (FANVVIAAIIVIGAVLGAAIGG) traverse the membrane as a helical segment. Over 382-398 (WLMGFFPIESAITAGLC) the chain is Cytoplasmic. 2 residues coordinate Na(+): Met399 and Asn401. Residues 399-406 (MANRGGSG) constitute an intramembrane region (helical). Residues Arg402, Gly404, and Ser405 each contribute to the citrate site. The Cytoplasmic portion of the chain corresponds to 407–416 (DLEVLSACNR). The helical transmembrane segment at 417 to 438 (MNLISYAQISSRLGGGIVLVIA) threads the bilayer. Position 428 (Arg428) interacts with citrate. Topologically, residues 439–446 (SIVFGMMI) are periplasmic.

It belongs to the 2-hydroxycarboxylate transporter (2-HCT) (TC 2.A.24) family. In terms of assembly, homodimer.

Its subcellular location is the cell inner membrane. The enzyme catalyses citrate(out) + 2 Na(+)(out) = citrate(in) + 2 Na(+)(in). With respect to regulation, in the absence of Na(+), transport is inhibited by the thiol reagents N-ethylmaleimide (NEM) and the methanethiosulfonate (MTS) derivatives MTSEA, MTSET and MTSES. However, inactivation by NEM, MTSES and MTSET is prevented by the presence of Na(+). In the absence of Na(+), the substrate citrate has no effect on the inactivation by permeable or impermeable thiol reagents. In contrast, when subsaturating concentrations of Na(+) are present, citrate significantly reduces inactivation, suggesting ordered binding of the substrate and co-ion; citrate is bound after Na(+). The membrane impermeable bulky maleimide AmdiS does not inactivate the transporter in right-side-out membrane vesicles. The apparent affinity for Na(+) decreases with increasing proton concentration. Protons cannot replace Na(+) in the translocation step but the decrease in apparent affinity for Na(+) towards lower pH suggests that protons can compete with Na(+) for the cation-binding sites. Secondary active transporter that catalyzes the uptake of citrate across the membrane with the concomitant uptake of sodium. There are conflicting data regarding exact substrate stoichiometry: the sodium/citrate stoichiometry was predicted to be 1, but the latest studies suggest that CitS transports citrate in symport with 2 sodium ions. Transports citrate as a divalent citrate anion, H-citrate(2-). Shows narrow substrate specificity and is very specific, transporting only citrate and to a low extent citromalate. Symport of Na(+) is absolutely required in the range pH 5-7 because no uptake can be detected in the absence of Na(+). Lithium can replace Na(+) in the symport reaction but it takes about a 200-fold higher concentration of Li(+) over Na(+) to achieve the same rate of uptake. This Klebsiella pneumoniae protein is Citrate/sodium symporter.